The sequence spans 341 residues: GTPase Obg (341 aa).

An Obg domain is found at 1–159 (MKFVDEALIK…RNLRLELRVL (159 aa)). The disordered stretch occupies residues 128 to 150 (TRYKSSVNRSPRQTTPGSPGESR). Polar residues predominate over residues 129–144 (RYKSSVNRSPRQTTPG). Residues 160–334 (ADVGLLGLPN…LCYALMQLID (175 aa)) form the OBG-type G domain. Residues 166-173 (GLPNAGKS), 191-195 (FTTLH), 213-216 (DIPG), 283-286 (NKID), and 315-317 (SAI) each bind GTP. 2 residues coordinate Mg(2+): Ser-173 and Thr-193.

The protein belongs to the TRAFAC class OBG-HflX-like GTPase superfamily. OBG GTPase family. In terms of assembly, monomer. It depends on Mg(2+) as a cofactor.

It is found in the cytoplasm. Functionally, an essential GTPase which binds GTP, GDP and possibly (p)ppGpp with moderate affinity, with high nucleotide exchange rates and a fairly low GTP hydrolysis rate. Plays a role in control of the cell cycle, stress response, ribosome biogenesis and in those bacteria that undergo differentiation, in morphogenesis control. The chain is GTPase Obg from Legionella pneumophila (strain Lens).